Consider the following 112-residue polypeptide: Transmembrane protein 14C (112 aa).

4 helical membrane passes run 7 to 27, 32 to 52, 62 to 82, and 86 to 106; these read VVPL…GGII, AGSV…SLGA, VWVF…RFYH, and FMPA…VGVS.

Belongs to the TMEM14 family.

The protein resides in the mitochondrion membrane. In terms of biological role, required for normal heme biosynthesis. This Pongo abelii (Sumatran orangutan) protein is Transmembrane protein 14C (TMEM14C).